Consider the following 625-residue polypeptide: MSGVEEISTLDEFRERRSDFEISEDERRRSKIGNLKKKAINASTKFTHSLKKRGKRKIDYRVPAVSIEDVRDEKEESVVLEFRRKLLERDLLPPRHDEYHTLLRFLKARDLNIEKTTQLWEEMLRWRKEYGTDTILEDFDFEELEEVLQYYPQGYHGVDKEGRPVYIERLGKAHPSKLMRITTIDRYLKYHVQEFERALQEKFPACSIAAKRRICSTTTILDVQGLGIKNFTPTAANLVAAMSKIDNSYYPETLHRMYIVNAGTGFKKMLWPAAQKFLDAKTIAKIHVLEPKSLFKLHEVIDSSQLPEFLGGSCSCFGDGGGCLRSNKGPWNDPEIMKLIYHGESSLFRQSTRKLTDPHYSSSYISIHPSKAIQAETSAAESISCSDVPSSPTGRLCSASSHVNSAYEEARASDVNGYYSCDDKFAIPDKATNRKGQERQSQYQMRELNATTIGLKCETSSPGAPIIRWLHDLRVMIDKIKCENLAKRLLSLMLKLAAVFRYTPLELLRSQTTVSPSSLTEDDSRCSLISPPPREPTMKDRILPCLERIQKLEKSYEDIRNKPVAIPVEKERMLMDSLDRIKSVEFDLDKTKRLLHATVMKQMEITEMLQNIRDSQLHRRRRLFC.

Residues 143 to 318 (ELEEVLQYYP…FLGGSCSCFG (176 aa)) enclose the CRAL-TRIO domain.

The protein belongs to the SFH family.

It localises to the golgi apparatus membrane. Its subcellular location is the cell membrane. Required for transport of secretory proteins from the Golgi complex. Catalyzes the transfer of phosphatidylinositol and phosphatidylcholine between membranes in vitro. The protein is Phosphatidylinositol/phosphatidylcholine transfer protein SFH13 (SFH13) of Arabidopsis thaliana (Mouse-ear cress).